We begin with the raw amino-acid sequence, 180 residues long: Glycodelin (180 aa).

Positions 1–18 (MLCLLLTLGVALVCGVPA) are cleaved as a signal peptide. N-linked (GlcNAc...) (complex) asparagine glycans are attached at residues asparagine 46 and asparagine 81. 2 disulfides stabilise this stretch: cysteine 84–cysteine 178 and cysteine 124–cysteine 137.

The protein belongs to the calycin superfamily. Lipocalin family. Homodimer. In terms of processing, four distinct glycoforms A, C, F and S arise from different N-linked oligosaccharide chains at amino acid residues Asn-46 and Asn-81. Glycodelin-A and -F are taken up by the cumulus cells in which partial deglycosylation takes place to produce glycodelin-C. As to expression, this protein is, the main protein synthesized and secreted in the endometrium from mid-luteal phase of the menstrual cycle and during the first semester of pregnancy. Glycodelin-A is expressed in amniotic fluid, endometrium/decidua and maternal serum (at protein level). Glycodelin-F is expressed in follicular fluid, luteinized granulosa cells and the oviduct (at protein level). Glycodelin-S is expressed in seminal plasma and seminal vesicles (at protein level). Glycodelin-C is detected in cumulus cells (at protein level), but cumulus cells do not synthesize Glycodelin-C but take up and convert glycodelin-A and -F vis glycan remodeling.

The protein localises to the secreted. Glycoprotein that regulates critical steps during fertilization and also has immunomonomodulatory effects. Four glycoforms, namely glycodelin-S, -A, -F and -C have been identified in reproductive tissues that differ in glycosylation and biological activity. Glycodelin-A has contraceptive and immunosuppressive activities. Glycodelin-C stimulates binding of spermatozoa to the zona pellucida. Glycodelin-F inhibits spermatozoa-zona pellucida binding and significantly suppresses progesterone-induced acrosome reaction of spermatozoa. Glycodelin-S in seminal plasma maintains the uncapacitated state of human spermatozoa. The polypeptide is Glycodelin (PAEP) (Homo sapiens (Human)).